Consider the following 473-residue polypeptide: UDP-glycosyltransferase 71B1 (473 aa).

His15 (proton acceptor) is an active-site residue. Position 15 (His15) interacts with an anthocyanidin. Asp110 (charge relay) is an active-site residue. UDP-alpha-D-glucose contacts are provided by Thr132, Ala342, Gln344, His359, Trp362, Asn363, Ser364, and Glu367. Ala382 contributes to the an anthocyanidin binding site. Positions 383 and 384 each coordinate UDP-alpha-D-glucose.

This sequence belongs to the UDP-glycosyltransferase family.

It carries out the reaction a flavonol + UDP-alpha-D-glucose = a flavonol 3-O-beta-D-glucoside + UDP + H(+). Its function is as follows. Possesses quercetin 3-O-glucosyltransferase activity in vitro. Also active in vitro on benzoates and benzoate derivatives. The protein is UDP-glycosyltransferase 71B1 (UGT71B1) of Arabidopsis thaliana (Mouse-ear cress).